Here is a 284-residue protein sequence, read N- to C-terminus: tRNA dimethylallyltransferase (284 aa).

6 to 13 (GPTASGKS) is a binding site for ATP. Residue 8 to 13 (TASGKS) coordinates substrate. The interval 31–34 (DSLS) is interaction with substrate tRNA.

Belongs to the IPP transferase family. As to quaternary structure, monomer. Mg(2+) serves as cofactor.

The enzyme catalyses adenosine(37) in tRNA + dimethylallyl diphosphate = N(6)-dimethylallyladenosine(37) in tRNA + diphosphate. Catalyzes the transfer of a dimethylallyl group onto the adenine at position 37 in tRNAs that read codons beginning with uridine, leading to the formation of N6-(dimethylallyl)adenosine (i(6)A). This Nautilia profundicola (strain ATCC BAA-1463 / DSM 18972 / AmH) protein is tRNA dimethylallyltransferase.